A 282-amino-acid polypeptide reads, in one-letter code: Biotin synthase (282 aa).

The Radical SAM core domain maps to 1–228 (MQEIFLCSIS…NARLMVAGGR (228 aa)). The [4Fe-4S] cluster site is built by cysteine 17, cysteine 21, and cysteine 24. Residues cysteine 61, cysteine 96, cysteine 154, and arginine 221 each coordinate [2Fe-2S] cluster.

It belongs to the radical SAM superfamily. Biotin synthase family. In terms of assembly, homodimer. The cofactor is [4Fe-4S] cluster. [2Fe-2S] cluster is required as a cofactor.

The enzyme catalyses (4R,5S)-dethiobiotin + (sulfur carrier)-SH + 2 reduced [2Fe-2S]-[ferredoxin] + 2 S-adenosyl-L-methionine = (sulfur carrier)-H + biotin + 2 5'-deoxyadenosine + 2 L-methionine + 2 oxidized [2Fe-2S]-[ferredoxin]. Its pathway is cofactor biosynthesis; biotin biosynthesis; biotin from 7,8-diaminononanoate: step 2/2. Catalyzes the conversion of dethiobiotin (DTB) to biotin by the insertion of a sulfur atom into dethiobiotin via a radical-based mechanism. The chain is Biotin synthase from Helicobacter pylori (strain J99 / ATCC 700824) (Campylobacter pylori J99).